The chain runs to 245 residues: 1-(5-phosphoribosyl)-5-[(5-phosphoribosylamino)methylideneamino] imidazole-4-carboxamide isomerase (245 aa).

Asp-7 acts as the Proton acceptor in catalysis. The Proton donor role is filled by Asp-129.

The protein belongs to the HisA/HisF family.

The protein localises to the cytoplasm. The catalysed reaction is 1-(5-phospho-beta-D-ribosyl)-5-[(5-phospho-beta-D-ribosylamino)methylideneamino]imidazole-4-carboxamide = 5-[(5-phospho-1-deoxy-D-ribulos-1-ylimino)methylamino]-1-(5-phospho-beta-D-ribosyl)imidazole-4-carboxamide. It functions in the pathway amino-acid biosynthesis; L-histidine biosynthesis; L-histidine from 5-phospho-alpha-D-ribose 1-diphosphate: step 4/9. The polypeptide is 1-(5-phosphoribosyl)-5-[(5-phosphoribosylamino)methylideneamino] imidazole-4-carboxamide isomerase (Shewanella baltica (strain OS155 / ATCC BAA-1091)).